A 179-amino-acid chain; its full sequence is Large ribosomal subunit protein uL6 (179 aa).

Belongs to the universal ribosomal protein uL6 family. As to quaternary structure, part of the 50S ribosomal subunit.

In terms of biological role, this protein binds to the 23S rRNA, and is important in its secondary structure. It is located near the subunit interface in the base of the L7/L12 stalk, and near the tRNA binding site of the peptidyltransferase center. In Solidesulfovibrio magneticus (strain ATCC 700980 / DSM 13731 / RS-1) (Desulfovibrio magneticus), this protein is Large ribosomal subunit protein uL6.